Consider the following 228-residue polypeptide: Non-specific lipid-transfer protein EPAD1 (228 aa).

The N-terminal stretch at 1 to 24 (MERSHLAVLLGLLAFAAGVPAAAA) is a signal peptide. 3 disulfides stabilise this stretch: cysteine 40/cysteine 62, cysteine 63/cysteine 105, and cysteine 78/cysteine 119. Asparagine 94 is a glycosylation site (N-linked (GlcNAc...) asparagine). Residues 124–207 (PPASIVTAPP…PPRSGASSSL (84 aa)) form a disordered region. A compositionally biased stretch (pro residues) spans 145 to 162 (REAPPPPPAAEKLSPPPQ).

This sequence belongs to the plant LTP family. In terms of tissue distribution, expressed in young panicles. Specifically expressed in pollen mother cells and young microspores.

Its subcellular location is the cell membrane. Functionally, plant non-specific lipid-transfer protein that binds phospholipids in vitro. Required for correct pollen exine patterning by controlling the continuity and homogeneity of the primexine distribution. The protein is Non-specific lipid-transfer protein EPAD1 of Oryza sativa subsp. japonica (Rice).